The primary structure comprises 413 residues: PCI domain-containing protein 2 homolog (413 aa).

The region spanning 222-403 (VAYNYFLGRK…QKLVISKTNA (182 aa)) is the PCI domain.

This sequence belongs to the CSN12 family.

This Caenorhabditis briggsae protein is PCI domain-containing protein 2 homolog.